Here is a 361-residue protein sequence, read N- to C-terminus: Phospho-N-acetylmuramoyl-pentapeptide-transferase (361 aa).

10 consecutive transmembrane segments (helical) span residues 21–41, 69–89, 93–113, 131–151, 168–188, 200–220, 240–260, 264–284, 289–309, and 338–358; these read YLTI…LMLG, VGTP…SILI, WSNI…AIGF, SIKF…IILI, IILP…IVGS, GLAI…AYFS, LFII…FNAY, IFMG…IAIL, ILLF…IIQV, and KIIV…LASI.

This sequence belongs to the glycosyltransferase 4 family. MraY subfamily. It depends on Mg(2+) as a cofactor.

The protein localises to the cell inner membrane. It catalyses the reaction UDP-N-acetyl-alpha-D-muramoyl-L-alanyl-gamma-D-glutamyl-meso-2,6-diaminopimeloyl-D-alanyl-D-alanine + di-trans,octa-cis-undecaprenyl phosphate = di-trans,octa-cis-undecaprenyl diphospho-N-acetyl-alpha-D-muramoyl-L-alanyl-D-glutamyl-meso-2,6-diaminopimeloyl-D-alanyl-D-alanine + UMP. It participates in cell wall biogenesis; peptidoglycan biosynthesis. Catalyzes the initial step of the lipid cycle reactions in the biosynthesis of the cell wall peptidoglycan: transfers peptidoglycan precursor phospho-MurNAc-pentapeptide from UDP-MurNAc-pentapeptide onto the lipid carrier undecaprenyl phosphate, yielding undecaprenyl-pyrophosphoryl-MurNAc-pentapeptide, known as lipid I. In Vesicomyosocius okutanii subsp. Calyptogena okutanii (strain HA), this protein is Phospho-N-acetylmuramoyl-pentapeptide-transferase.